The primary structure comprises 316 residues: Diacylglycerol kinase (316 aa).

A DAGKc domain is found at 1–132; sequence MRKRARIIYN…VDIGKMNNRY (132 aa). Residues 10-14, Thr41, 67-73, and Thr94 contribute to the ATP site; these read NPTSG and GDGTLNE. Positions 213, 216, and 218 each coordinate Mg(2+). Glu273 serves as the catalytic Proton acceptor.

It belongs to the diacylglycerol/lipid kinase family. As to quaternary structure, homodimer. It depends on Mg(2+) as a cofactor.

It catalyses the reaction a 1,2-diacyl-sn-glycerol + ATP = a 1,2-diacyl-sn-glycero-3-phosphate + ADP + H(+). Catalyzes the phosphorylation of diacylglycerol (DAG) into phosphatidic acid. Is a key enzyme involved in the production of lipoteichoic acid by reintroducing DAG formed from the breakdown of membrane phospholipids into the phosphatidylglycerol biosynthetic pathway. This is Diacylglycerol kinase (dagK) from Staphylococcus epidermidis (strain ATCC 35984 / DSM 28319 / BCRC 17069 / CCUG 31568 / BM 3577 / RP62A).